Consider the following 116-residue polypeptide: Protein AV2 (116 aa).

It belongs to the geminiviridae protein AV2/V2 family. In terms of assembly, interacts with host SGS3.

It is found in the host cytoplasm. Its subcellular location is the host perinuclear region. Its function is as follows. Through its interaction with host SGS3, acts as a suppressor of RNA-mediated gene silencing, also known as post-transcriptional gene silencing (PTGS), a mechanism of plant viral defense that limits the accumulation of viral RNAs. The protein is Protein AV2 of Mungbean yellow mosaic virus (strain Vigna) (MYMV).